The sequence spans 412 residues: B3 domain-containing protein Os02g0683500 (412 aa).

The interval 1-87 (MEFTTSSRFS…GGGGGGGGEA (87 aa)) is disordered. Positions 30 to 65 (TATAEAAPAPTSSSSSPAHHAASASASASASGSSTP) are enriched in low complexity. Residues 73 to 86 (GASGSGGGGGGGGE) show a composition bias toward gly residues. The TF-B3 DNA-binding region spans 96 to 200 (FDKVVTPSDV…RHRLFIDWKR (105 aa)). Residues 374-412 (RLLELPPHHHHGAESSAASSPSSSSSSKRDAHSALDLDL) form a disordered region. Residues 387-399 (ESSAASSPSSSSS) show a composition bias toward low complexity. Over residues 400–412 (SKRDAHSALDLDL) the composition is skewed to basic and acidic residues.

It is found in the nucleus. The protein is B3 domain-containing protein Os02g0683500 of Oryza sativa subsp. japonica (Rice).